A 286-amino-acid polypeptide reads, in one-letter code: Phosphatidylserine decarboxylase proenzyme (286 aa).

Residues aspartate 89, histidine 146, and serine 252 each act as charge relay system; for autoendoproteolytic cleavage activity in the active site. Serine 252 acts as the Schiff-base intermediate with substrate; via pyruvic acid; for decarboxylase activity in catalysis. Serine 252 carries the post-translational modification Pyruvic acid (Ser); by autocatalysis.

This sequence belongs to the phosphatidylserine decarboxylase family. PSD-B subfamily. Prokaryotic type I sub-subfamily. As to quaternary structure, heterodimer of a large membrane-associated beta subunit and a small pyruvoyl-containing alpha subunit. Requires pyruvate as cofactor. Post-translationally, is synthesized initially as an inactive proenzyme. Formation of the active enzyme involves a self-maturation process in which the active site pyruvoyl group is generated from an internal serine residue via an autocatalytic post-translational modification. Two non-identical subunits are generated from the proenzyme in this reaction, and the pyruvate is formed at the N-terminus of the alpha chain, which is derived from the carboxyl end of the proenzyme. The autoendoproteolytic cleavage occurs by a canonical serine protease mechanism, in which the side chain hydroxyl group of the serine supplies its oxygen atom to form the C-terminus of the beta chain, while the remainder of the serine residue undergoes an oxidative deamination to produce ammonia and the pyruvoyl prosthetic group on the alpha chain. During this reaction, the Ser that is part of the protease active site of the proenzyme becomes the pyruvoyl prosthetic group, which constitutes an essential element of the active site of the mature decarboxylase.

The protein resides in the cell membrane. It catalyses the reaction a 1,2-diacyl-sn-glycero-3-phospho-L-serine + H(+) = a 1,2-diacyl-sn-glycero-3-phosphoethanolamine + CO2. It functions in the pathway phospholipid metabolism; phosphatidylethanolamine biosynthesis; phosphatidylethanolamine from CDP-diacylglycerol: step 2/2. Catalyzes the formation of phosphatidylethanolamine (PtdEtn) from phosphatidylserine (PtdSer). This Shewanella loihica (strain ATCC BAA-1088 / PV-4) protein is Phosphatidylserine decarboxylase proenzyme.